The chain runs to 489 residues: UDP-N-acetylmuramoyl-L-alanyl-D-glutamate--2,6-diaminopimelate ligase (489 aa).

Residue serine 30 coordinates UDP-N-acetyl-alpha-D-muramoyl-L-alanyl-D-glutamate. 113–119 (GTNGKTS) is an ATP binding site. UDP-N-acetyl-alpha-D-muramoyl-L-alanyl-D-glutamate is bound by residues 155–156 (TT), serine 182, glutamine 188, and arginine 190. Lysine 222 is modified (N6-carboxylysine). Residues arginine 388, 412–415 (DNPR), glycine 463, and glutamate 467 contribute to the meso-2,6-diaminopimelate site. Residues 412–415 (DNPR) carry the Meso-diaminopimelate recognition motif motif.

The protein belongs to the MurCDEF family. MurE subfamily. It depends on Mg(2+) as a cofactor. Carboxylation is probably crucial for Mg(2+) binding and, consequently, for the gamma-phosphate positioning of ATP.

The protein resides in the cytoplasm. The enzyme catalyses UDP-N-acetyl-alpha-D-muramoyl-L-alanyl-D-glutamate + meso-2,6-diaminopimelate + ATP = UDP-N-acetyl-alpha-D-muramoyl-L-alanyl-gamma-D-glutamyl-meso-2,6-diaminopimelate + ADP + phosphate + H(+). It functions in the pathway cell wall biogenesis; peptidoglycan biosynthesis. In terms of biological role, catalyzes the addition of meso-diaminopimelic acid to the nucleotide precursor UDP-N-acetylmuramoyl-L-alanyl-D-glutamate (UMAG) in the biosynthesis of bacterial cell-wall peptidoglycan. This is UDP-N-acetylmuramoyl-L-alanyl-D-glutamate--2,6-diaminopimelate ligase from Coxiella burnetii (strain RSA 493 / Nine Mile phase I).